The sequence spans 312 residues: Cytoplasmic dynein intermediate light chain DYN3 (312 aa).

The protein belongs to the dynein light intermediate chain DYN3 family. The dynein complex consists of at least two heavy chains and a number of intermediate and light chains. Interacts with DYN1.

The protein localises to the cytoplasm. Its subcellular location is the cytoskeleton. Its function is as follows. Component of the cytoplasmic dynein which acts as a motor for the intracellular retrograde motility of vesicles and organelles along microtubules. May play an important role in the proper orientation of the mitotic spindle into the budding daughter cell yeast. Probably required for normal progression of the cell cycle. The protein is Cytoplasmic dynein intermediate light chain DYN3 (DYN3) of Saccharomyces cerevisiae (strain ATCC 204508 / S288c) (Baker's yeast).